Here is a 122-residue protein sequence, read N- to C-terminus: Large ribosomal subunit protein uL14 (122 aa).

This sequence belongs to the universal ribosomal protein uL14 family. In terms of assembly, part of the 50S ribosomal subunit. Forms a cluster with proteins L3 and L19. In the 70S ribosome, L14 and L19 interact and together make contacts with the 16S rRNA in bridges B5 and B8.

Functionally, binds to 23S rRNA. Forms part of two intersubunit bridges in the 70S ribosome. The sequence is that of Large ribosomal subunit protein uL14 from Nitrosospira multiformis (strain ATCC 25196 / NCIMB 11849 / C 71).